The primary structure comprises 136 residues: Small ribosomal subunit protein uS19 (136 aa).

The protein belongs to the universal ribosomal protein uS19 family.

Functionally, protein S19 forms a complex with S13 that binds strongly to the 16S ribosomal RNA. The sequence is that of Small ribosomal subunit protein uS19 from Methanosarcina mazei (strain ATCC BAA-159 / DSM 3647 / Goe1 / Go1 / JCM 11833 / OCM 88) (Methanosarcina frisia).